Consider the following 405-residue polypeptide: Acetate kinase (405 aa).

Mg(2+) is bound at residue asparagine 7. Lysine 14 serves as a coordination point for ATP. Position 98 (arginine 98) interacts with substrate. Catalysis depends on aspartate 156, which acts as the Proton donor/acceptor. Residues 215–219, 290–292, and 338–342 contribute to the ATP site; these read HLGNG, DLR, and GVGEN. Glutamate 391 lines the Mg(2+) pocket.

This sequence belongs to the acetokinase family. In terms of assembly, homodimer. Mg(2+) serves as cofactor. Mn(2+) is required as a cofactor.

The protein resides in the cytoplasm. The catalysed reaction is acetate + ATP = acetyl phosphate + ADP. The protein operates within metabolic intermediate biosynthesis; acetyl-CoA biosynthesis; acetyl-CoA from acetate: step 1/2. In terms of biological role, catalyzes the formation of acetyl phosphate from acetate and ATP. Can also catalyze the reverse reaction. The chain is Acetate kinase from Gloeobacter violaceus (strain ATCC 29082 / PCC 7421).